Consider the following 332-residue polypeptide: Tetraacyldisaccharide 4'-kinase (332 aa).

60-67 (TVGGTGKT) contacts ATP.

The protein belongs to the LpxK family.

It carries out the reaction a lipid A disaccharide + ATP = a lipid IVA + ADP + H(+). It participates in glycolipid biosynthesis; lipid IV(A) biosynthesis; lipid IV(A) from (3R)-3-hydroxytetradecanoyl-[acyl-carrier-protein] and UDP-N-acetyl-alpha-D-glucosamine: step 6/6. Its function is as follows. Transfers the gamma-phosphate of ATP to the 4'-position of a tetraacyldisaccharide 1-phosphate intermediate (termed DS-1-P) to form tetraacyldisaccharide 1,4'-bis-phosphate (lipid IVA). This chain is Tetraacyldisaccharide 4'-kinase, found in Pseudomonas aeruginosa (strain LESB58).